Here is a 117-residue protein sequence, read N- to C-terminus: Large ribosomal subunit protein uL22 (117 aa).

It belongs to the universal ribosomal protein uL22 family. As to quaternary structure, part of the 50S ribosomal subunit.

This protein binds specifically to 23S rRNA; its binding is stimulated by other ribosomal proteins, e.g. L4, L17, and L20. It is important during the early stages of 50S assembly. It makes multiple contacts with different domains of the 23S rRNA in the assembled 50S subunit and ribosome. In terms of biological role, the globular domain of the protein is located near the polypeptide exit tunnel on the outside of the subunit, while an extended beta-hairpin is found that lines the wall of the exit tunnel in the center of the 70S ribosome. The sequence is that of Large ribosomal subunit protein uL22 from Lactobacillus gasseri (strain ATCC 33323 / DSM 20243 / BCRC 14619 / CIP 102991 / JCM 1131 / KCTC 3163 / NCIMB 11718 / NCTC 13722 / AM63).